The primary structure comprises 330 residues: Phosphate acyltransferase (330 aa).

This sequence belongs to the PlsX family. In terms of assembly, homodimer. Probably interacts with PlsY.

The protein localises to the cytoplasm. It carries out the reaction a fatty acyl-[ACP] + phosphate = an acyl phosphate + holo-[ACP]. The protein operates within lipid metabolism; phospholipid metabolism. In terms of biological role, catalyzes the reversible formation of acyl-phosphate (acyl-PO(4)) from acyl-[acyl-carrier-protein] (acyl-ACP). This enzyme utilizes acyl-ACP as fatty acyl donor, but not acyl-CoA. The chain is Phosphate acyltransferase from Streptococcus agalactiae serotype Ia (strain ATCC 27591 / A909 / CDC SS700).